The following is a 190-amino-acid chain: Lipid A acyltransferase PagP (190 aa).

A signal peptide spans Met1–Ala18. Catalysis depends on residues His60, Asp103, and Ser104.

The protein belongs to the lipid A palmitoyltransferase family. In terms of assembly, homodimer.

It localises to the cell outer membrane. It carries out the reaction a lipid A + a 1,2-diacyl-sn-glycero-3-phosphocholine = a hepta-acyl lipid A + a 2-acyl-sn-glycero-3-phosphocholine. The enzyme catalyses a lipid IVA + a 1,2-diacyl-sn-glycero-3-phosphocholine = a lipid IVB + a 2-acyl-sn-glycero-3-phosphocholine. The catalysed reaction is a lipid IIA + a 1,2-diacyl-sn-glycero-3-phosphocholine = a lipid IIB + a 2-acyl-sn-glycero-3-phosphocholine. In terms of biological role, transfers a fatty acid residue from the sn-1 position of a phospholipid to the N-linked hydroxyfatty acid chain on the proximal unit of lipid A or its precursors. In Legionella pneumophila (strain Paris), this protein is Lipid A acyltransferase PagP.